We begin with the raw amino-acid sequence, 557 residues long: Dihydroxy-acid dehydratase (557 aa).

Aspartate 78 is a binding site for Mg(2+). Cysteine 119 serves as a coordination point for [2Fe-2S] cluster. Positions 120 and 121 each coordinate Mg(2+). Lysine 121 bears the N6-carboxylysine mark. Cysteine 192 is a [2Fe-2S] cluster binding site. Glutamate 446 lines the Mg(2+) pocket. Serine 472 (proton acceptor) is an active-site residue.

It belongs to the IlvD/Edd family. As to quaternary structure, homodimer. [2Fe-2S] cluster is required as a cofactor. Mg(2+) serves as cofactor.

The catalysed reaction is (2R)-2,3-dihydroxy-3-methylbutanoate = 3-methyl-2-oxobutanoate + H2O. It carries out the reaction (2R,3R)-2,3-dihydroxy-3-methylpentanoate = (S)-3-methyl-2-oxopentanoate + H2O. It functions in the pathway amino-acid biosynthesis; L-isoleucine biosynthesis; L-isoleucine from 2-oxobutanoate: step 3/4. The protein operates within amino-acid biosynthesis; L-valine biosynthesis; L-valine from pyruvate: step 3/4. In terms of biological role, functions in the biosynthesis of branched-chain amino acids. Catalyzes the dehydration of (2R,3R)-2,3-dihydroxy-3-methylpentanoate (2,3-dihydroxy-3-methylvalerate) into 2-oxo-3-methylpentanoate (2-oxo-3-methylvalerate) and of (2R)-2,3-dihydroxy-3-methylbutanoate (2,3-dihydroxyisovalerate) into 2-oxo-3-methylbutanoate (2-oxoisovalerate), the penultimate precursor to L-isoleucine and L-valine, respectively. The chain is Dihydroxy-acid dehydratase from Campylobacter fetus subsp. fetus (strain 82-40).